Consider the following 170-residue polypeptide: MKTMATRKRCKLSRTGPEFENVIKRLLCARTFHTRIGGDLTHGIINRGRRANAEQMGLQGSAQHFNIFPLDLWTQGKKTEVQKREGTDSIPAAGRSGTANQPSIAPHRCLFSRGITALDGLKRGRGCNGAAHLVRGDAWKTKLGEPWVSIALALAGPGAILILELSWFLG.

A helical membrane pass occupies residues 150–170 (IALALAGPGAILILELSWFLG).

Expressed at high levels in the pancreas and placenta. In terms of tissue distribution, expressed at high levels in the kidney.

It localises to the membrane. In Homo sapiens (Human), this protein is APRG1 tumor suppressor candidate.